The chain runs to 449 residues: Adenylyltransferase and sulfurtransferase MOCS3 (449 aa).

Residues Gly96, Asp117, Ser124–Arg128, Lys141, and Asp185–Asn186 contribute to the ATP site. Zn(2+)-binding residues include Cys227 and Cys230. The Glycyl thioester intermediate; for adenylyltransferase activity role is filled by Cys244. The Zn(2+) site is built by Cys302 and Cys305. Positions Gln351–Pro447 constitute a Rhodanese domain. The active-site Cysteine persulfide intermediate; for sulfurtransferase activity is Cys406.

In the N-terminal section; belongs to the HesA/MoeB/ThiF family. UBA4 subfamily. Zn(2+) is required as a cofactor.

It localises to the cytoplasm. The protein localises to the cytosol. The catalysed reaction is [molybdopterin-synthase sulfur-carrier protein]-C-terminal Gly-Gly + ATP + H(+) = [molybdopterin-synthase sulfur-carrier protein]-C-terminal Gly-Gly-AMP + diphosphate. The enzyme catalyses [molybdopterin-synthase sulfur-carrier protein]-C-terminal Gly-Gly-AMP + S-sulfanyl-L-cysteinyl-[cysteine desulfurase] + AH2 = [molybdopterin-synthase sulfur-carrier protein]-C-terminal-Gly-aminoethanethioate + L-cysteinyl-[cysteine desulfurase] + A + AMP + 2 H(+). Its pathway is tRNA modification; 5-methoxycarbonylmethyl-2-thiouridine-tRNA biosynthesis. The protein operates within cofactor biosynthesis; molybdopterin biosynthesis. Plays a central role in 2-thiolation of mcm(5)S(2)U at tRNA wobble positions of cytosolic tRNA(Lys), tRNA(Glu) and tRNA(Gln). Also essential during biosynthesis of the molybdenum cofactor. Acts by mediating the C-terminal thiocarboxylation of sulfur carriers URM1 and MOCS2A. Its N-terminus first activates URM1 and MOCS2A as acyl-adenylates (-COAMP), then the persulfide sulfur on the catalytic cysteine is transferred to URM1 and MOCS2A to form thiocarboxylation (-COSH) of their C-terminus. The reaction probably involves hydrogen sulfide that is generated from the persulfide intermediate and that acts as a nucleophile towards URM1 and MOCS2A. Subsequently, a transient disulfide bond is formed. Does not use thiosulfate as sulfur donor; NFS1 probably acting as a sulfur donor for thiocarboxylation reactions. This is Adenylyltransferase and sulfurtransferase MOCS3 from Drosophila grimshawi (Hawaiian fruit fly).